The primary structure comprises 397 residues: Serpin-Z7 (397 aa).

N-acetylalanine is present on A2. Residues 344-368 (GTKAGAATGDVIVDRSLPIRMDFVA) form an RCL region.

It belongs to the serpin family. Highly expressed in endosperm, at intermediate level in embryo and at lower levels in roots.

Inhibits chymotrypsin in vitro. The protein is Serpin-Z7 (PAZ7) of Hordeum vulgare (Barley).